Reading from the N-terminus, the 118-residue chain is Small ribosomal subunit protein uS13 (118 aa).

Positions 94–118 are disordered; it reads SLPLRGQRTKTNARTRKGPRKPIKK.

It belongs to the universal ribosomal protein uS13 family. Part of the 30S ribosomal subunit. Forms a loose heterodimer with protein S19. Forms two bridges to the 50S subunit in the 70S ribosome.

Located at the top of the head of the 30S subunit, it contacts several helices of the 16S rRNA. In the 70S ribosome it contacts the 23S rRNA (bridge B1a) and protein L5 of the 50S subunit (bridge B1b), connecting the 2 subunits; these bridges are implicated in subunit movement. Contacts the tRNAs in the A and P-sites. The protein is Small ribosomal subunit protein uS13 of Vibrio cholerae serotype O1 (strain ATCC 39315 / El Tor Inaba N16961).